Reading from the N-terminus, the 111-residue chain is ATP synthase subunit c (111 aa).

2 helical membrane passes run 38-58 (GLGVVAVGAGLAMIGAIGSGL) and 89-109 (AGIAETASIYSFIVALLLIFV).

The protein belongs to the ATPase C chain family. In terms of assembly, F-type ATPases have 2 components, F(1) - the catalytic core - and F(0) - the membrane proton channel. F(1) has five subunits: alpha(3), beta(3), gamma(1), delta(1), epsilon(1). F(0) has three main subunits: a(1), b(2) and c(10-14). The alpha and beta chains form an alternating ring which encloses part of the gamma chain. F(1) is attached to F(0) by a central stalk formed by the gamma and epsilon chains, while a peripheral stalk is formed by the delta and b chains.

Its subcellular location is the cell membrane. Functionally, f(1)F(0) ATP synthase produces ATP from ADP in the presence of a proton or sodium gradient. F-type ATPases consist of two structural domains, F(1) containing the extramembraneous catalytic core and F(0) containing the membrane proton channel, linked together by a central stalk and a peripheral stalk. During catalysis, ATP synthesis in the catalytic domain of F(1) is coupled via a rotary mechanism of the central stalk subunits to proton translocation. In terms of biological role, key component of the F(0) channel; it plays a direct role in translocation across the membrane. A homomeric c-ring of between 10-14 subunits forms the central stalk rotor element with the F(1) delta and epsilon subunits. The sequence is that of ATP synthase subunit c from Mycoplasmopsis synoviae (strain 53) (Mycoplasma synoviae).